A 341-amino-acid polypeptide reads, in one-letter code: Major histocompatibility complex class I-related protein 1 (341 aa).

The N-terminal stretch at 1-18 is a signal peptide; that stretch reads MMLLLPLLAVFLVKRSHT. The segment at 19-105 is alpha-1; the sequence is RTHSLRYFRL…RHLQRHYNHS (87 aa). The segment at 19 to 197 is antigen-binding cleft; it reads RTHSLRYFRL…EYGRDTLERT (179 aa). Topologically, residues 19–296 are extracellular; that stretch reads RTHSLRYFRL…APRESGDILR (278 aa). The 8-(9H-purin-6-yl)-2-oxa-8-azabicyclo[3.3.1]nona-3,6-diene-4,6-dicarbaldehyde site is built by Tyr25 and Arg27. 3 residues coordinate 5-(2-oxoethylideneamino)-6-(D-ribitylamino)uracil: Arg27, Ser42, and Lys61. Positions 27, 42, and 61 each coordinate 5-(2-oxopropylideneamino)-6-(D-ribitylamino)uracil. 7-hydroxy-6-methyl-8-(1-D-ribityl)lumazine contacts are provided by Arg27, Ser42, and Lys61. The 8-(9H-purin-6-yl)-2-oxa-8-azabicyclo[3.3.1]nona-3,6-diene-4,6-dicarbaldehyde site is built by Lys61 and His76. Residue Lys61 participates in 2-amino-4-oxopteridine-6-carbaldehyde binding. Position 61 (Lys61) interacts with pyridoxal. N-linked (GlcNAc...) asparagine glycosylation occurs at Asn103. The segment at 106-197 is alpha-2; sequence GLHTYQRMIG…EYGRDTLERT (92 aa). 8-(9H-purin-6-yl)-2-oxa-8-azabicyclo[3.3.1]nona-3,6-diene-4,6-dicarbaldehyde is bound at residue Arg112. 5-(2-oxoethylideneamino)-6-(D-ribitylamino)uracil-binding residues include Arg112, Tyr170, and Gln171. 3 residues coordinate 5-(2-oxopropylideneamino)-6-(D-ribitylamino)uracil: Arg112, Tyr170, and Gln171. Positions 112, 170, and 171 each coordinate 7-hydroxy-6-methyl-8-(1-D-ribityl)lumazine. 2 disulfides stabilise this stretch: Cys116–Cys179 and Cys218–Cys274. The tract at residues 198 to 289 is alpha-3; the sequence is EHPVVRTTRK…GRQMVLEAPR (92 aa). In terms of domain architecture, Ig-like C1-type spans 200–301; that stretch reads PVVRTTRKET…GDILRVSTIS (102 aa). Positions 290–296 are connecting peptide; it reads ESGDILR. Residues 297–317 form a helical membrane-spanning segment; sequence VSTISGTTILIIALAGVGVLI. Residues 318–341 lie on the Cytoplasmic side of the membrane; the sequence is WRRSQELKEVMYQPTQVNEGSSPS.

The protein belongs to the MHC class I family. In terms of assembly, heterotrimer that consists of MR1, B2M and metabolite antigen. Major classes of metabolite ligands presented by MR1 include riboflavin-related antigens, pyrimidines and ribityl lumazines, nucleobase adducts and folate derivatives. Forms reversible covalent Schiff base complexes with microbial pyrimidine-based metabolite, which serves as a molecular switch triggering complete folding, stable association with B2M and translocation of the ternary complex from endoplasmic reticulum to the plasma membrane. Alternatively, forms non-Schiff base complexes with ribityl lumazines. On antigen-presenting cells, the ternary complex interacts with TCR on MR1-restricted CD4- or CD8-positive T cell subsets. Interacts with TAPBP and TAPBPL chaperones in the endoplasmic reticulum. TAPBP associated or not with MHC class I peptide loading complex binds ligand-free MR1 or MR1-B2M complex, providing for stable MR1 pools ready for metabolite antigen processing. TAPBPL interacts with MR1 in a ligand-independent way; this interaction may stabilize MR1 pool and facilitate ligand loading and dissociation. Structurally, MR1-B2M heterodimer adopts a topology similar to classical MHC class I molecules, with alpha-1 and alpha-2 domains of MR1 forming the antigen-binding cleft composed of two alpha-helices resting on a floor of 7-stranded anti-parallel beta-pleated sheet. In terms of processing, N-glycosylated. In terms of tissue distribution, highly expressed thymus. Expressed in liver, kidney, spleen, heart, brain, lung, skeletal muscle and testis.

It localises to the cell membrane. Its subcellular location is the endoplasmic reticulum membrane. The protein localises to the golgi apparatus membrane. The protein resides in the early endosome membrane. It is found in the late endosome membrane. Its function is as follows. Antigen-presenting molecule specialized in displaying microbial pyrimidine-based metabolites to alpha-beta T cell receptors (TCR) on innate-type mucosal-associated invariant T (MAIT) cells. In complex with B2M preferentially presents riboflavin-derived metabolites to semi-invariant TRAV1 TCRs on MAIT cells, guiding immune surveillance of the microbial metabolome at mucosal epithelial barriers. Signature pyrimidine-based microbial antigens are generated via non-enzymatic condensation of metabolite intermediates of the riboflavin pathway with by-products arising from other metabolic pathways such as glycolysis. Typical potent antigenic metabolites are 5-(2-oxoethylideneamino)-6-D-ribitylaminouracil (5-OE-RU) and 5-(2-oxopropylideneamino)-6-D-ribitylaminouracil (5-OP-RU), products of condensation of 5-amino-6-D-ribityaminouracil (5-A-RU) with glyoxal or methylglyoxal by-products, respectively. May present microbial antigens to various TRAV1-negative MAIT cell subsets, providing for unique recognition of diverse microbes, including pathogens that do not synthesize riboflavin. Upon antigen recognition, elicits rapid innate-type MAIT cell activation to eliminate pathogenic microbes by directly killing infected cells. During T cell development, drives thymic selection and post-thymic terminal differentiation of MAIT cells in a process dependent on commensal microflora. Acts as an immune sensor of cancer cell metabolome. May present a tumor-specific or -associated metabolite essential for cancer cell survival to a pan-cancer TCR on a non-MAIT CD8-positive T cell clone, triggering T cell-mediated killing of a wide range of cancer cell types. May present tumor-enriched pyridoxal and pyridoxal 5'-phosphate antigens, enabling preferential recognition of cancer cells. Presents nucleobase carbonyl adducts generated during oxidative stress. Captures M3Ade, a nucleobase adduct composed of one adenine modified by a malondialdehyde trimer, for recognition by MR1-restricted T cell clones expressing a polyclonal TCR repertoire. The protein is Major histocompatibility complex class I-related protein 1 of Mus musculus (Mouse).